The sequence spans 366 residues: uncharacterized protein (366 aa).

The segment at M1–K135 is disordered. The segment covering P26 to P38 has biased composition (basic and acidic residues). S69 is modified (phosphoserine). T76 bears the Phosphothreonine mark. K78 is covalently cross-linked (Glycyl lysine isopeptide (Lys-Gly) (interchain with G-Cter in ubiquitin)). The segment covering Q97–H108 has biased composition (basic residues). Residue K187 forms a Glycyl lysine isopeptide (Lys-Gly) (interchain with G-Cter in ubiquitin) linkage. T189 is modified (phosphothreonine). Residue K242 forms a Glycyl lysine isopeptide (Lys-Gly) (interchain with G-Cter in ubiquitin) linkage. Residues S288 and S294 each carry the phosphoserine modification. Residues T313 to H366 are disordered. The segment covering G316–R327 has biased composition (basic and acidic residues). Positions T328–S338 are enriched in polar residues. Residues G339–T349 are compositionally biased toward basic and acidic residues. Over residues L353 to H366 the composition is skewed to basic residues. S359 is subject to Phosphoserine.

The protein belongs to the pal1 family.

It localises to the cytoplasm. The protein localises to the nucleus. This is an uncharacterized protein from Saccharomyces cerevisiae (strain ATCC 204508 / S288c) (Baker's yeast).